Here is a 164-residue protein sequence, read N- to C-terminus: UPF0304 protein KPK_1463 (164 aa).

Belongs to the UPF0304 family.

The polypeptide is UPF0304 protein KPK_1463 (Klebsiella pneumoniae (strain 342)).